Reading from the N-terminus, the 124-residue chain is MTWQAYVDNNLLGAGFASAALLGAADGSVWAHSAGFNVAEGKAITALFQKDGAAFATGIHVAGKKYMAIKSDTRSAYGKLGAGGVVCVKTLTCIIVAVYDDKLQPGAAANIAEKLADYLIDNNC.

This sequence belongs to the profilin family. Occurs in many kinds of cells as a complex with monomeric actin in a 1:1 ratio. Interacts with forH.

It localises to the cytoplasm. It is found in the cytoskeleton. In terms of biological role, binds to actin and affects the structure of the cytoskeleton. At high concentrations, profilin prevents the polymerization of actin, whereas it enhances it at low concentrations. By binding to PIP2, it inhibits the formation of IP3 and DG. The sequence is that of Profilin-2 (proB) from Dictyostelium discoideum (Social amoeba).